The sequence spans 837 residues: AdoMet-dependent rRNA methyltransferase SPB1 (837 aa).

Residues Gly58, Trp60, Asp78, Asp94, and Asp119 each coordinate S-adenosyl-L-methionine. Catalysis depends on Lys159, which acts as the Proton acceptor. A coiled-coil region spans residues 345–390 (LNEEEQIEKELRDLQEKQKQKQKREKRRKNEEKQKELTRMQMNMLT). 4 disordered regions span residues 359 to 381 (QEKQ…QKEL), 483 to 529 (FRAK…DEDD), 573 to 644 (TDDV…TTKE), and 779 to 808 (TKKQ…KGIK). Basic and acidic residues predominate over residues 372–381 (RKNEEKQKEL). Residues 518-529 (ESDDSELSDEDD) show a composition bias toward acidic residues. Residues 593 to 602 (SYNEMKKEDL) are compositionally biased toward basic and acidic residues. Residues 603–635 (SDSSDEDSSSESDFEIVANDESDGDIDSDYDSD) are compositionally biased toward acidic residues.

Belongs to the class I-like SAM-binding methyltransferase superfamily. RNA methyltransferase RlmE family. SPB1 subfamily. As to quaternary structure, component of the nucleolar and nucleoplasmic pre-60S ribosomal particle.

The protein resides in the nucleus. The protein localises to the nucleolus. The catalysed reaction is a ribonucleotide in rRNA + S-adenosyl-L-methionine = a 2'-O-methylribonucleotide in rRNA + S-adenosyl-L-homocysteine + H(+). In terms of biological role, required for proper assembly of pre-ribosomal particles during the biogenesis of the 60S ribosomal subunit. The protein is AdoMet-dependent rRNA methyltransferase SPB1 of Candida glabrata (strain ATCC 2001 / BCRC 20586 / JCM 3761 / NBRC 0622 / NRRL Y-65 / CBS 138) (Yeast).